Here is a 282-residue protein sequence, read N- to C-terminus: Proteasome subunit beta (282 aa).

Residues 1-54 constitute a propeptide, removed in mature form; by autocatalysis; that stretch reads MGSHRDLPAGMVNHIFTNSGISSFTEFVGSYAPDLLPGRNETLAAPVGDRIPHA. Catalysis depends on Thr55, which acts as the Nucleophile.

The protein belongs to the peptidase T1B family. As to quaternary structure, the 20S proteasome core is composed of 14 alpha and 14 beta subunits that assemble into four stacked heptameric rings, resulting in a barrel-shaped structure. The two inner rings, each composed of seven catalytic beta subunits, are sandwiched by two outer rings, each composed of seven alpha subunits. The catalytic chamber with the active sites is on the inside of the barrel. Has a gated structure, the ends of the cylinder being occluded by the N-termini of the alpha-subunits. Is capped by the proteasome-associated ATPase, ARC.

The protein resides in the cytoplasm. The enzyme catalyses Cleavage of peptide bonds with very broad specificity.. It functions in the pathway protein degradation; proteasomal Pup-dependent pathway. The formation of the proteasomal ATPase ARC-20S proteasome complex, likely via the docking of the C-termini of ARC into the intersubunit pockets in the alpha-rings, may trigger opening of the gate for substrate entry. Interconversion between the open-gate and close-gate conformations leads to a dynamic regulation of the 20S proteasome proteolysis activity. Its function is as follows. Component of the proteasome core, a large protease complex with broad specificity involved in protein degradation. The protein is Proteasome subunit beta of Streptosporangium roseum (strain ATCC 12428 / DSM 43021 / JCM 3005 / KCTC 9067 / NCIMB 10171 / NRRL 2505 / NI 9100).